Reading from the N-terminus, the 501-residue chain is ATP synthase subunit alpha (501 aa).

169 to 176 (GDRQTGKT) lines the ATP pocket.

Belongs to the ATPase alpha/beta chains family. In terms of assembly, F-type ATPases have 2 components, CF(1) - the catalytic core - and CF(0) - the membrane proton channel. CF(1) has five subunits: alpha(3), beta(3), gamma(1), delta(1), epsilon(1). CF(0) has three main subunits: a(1), b(2) and c(9-12). The alpha and beta chains form an alternating ring which encloses part of the gamma chain. CF(1) is attached to CF(0) by a central stalk formed by the gamma and epsilon chains, while a peripheral stalk is formed by the delta and b chains.

The protein localises to the cell inner membrane. It catalyses the reaction ATP + H2O + 4 H(+)(in) = ADP + phosphate + 5 H(+)(out). Its function is as follows. Produces ATP from ADP in the presence of a proton gradient across the membrane. The alpha chain is a regulatory subunit. The sequence is that of ATP synthase subunit alpha from Campylobacter lari (strain RM2100 / D67 / ATCC BAA-1060).